The sequence spans 189 residues: Insecticyanin-A (189 aa).

2 cysteine pairs are disulfide-bonded: Cys-9–Cys-119 and Cys-43–Cys-175.

It belongs to the calycin superfamily. Lipocalin family. As to quaternary structure, homotetramer. In terms of tissue distribution, synthesized only in the caterpillars, apparently by the epidermis and secreted into the hemolymph. The protein is passed over from the larval hemolymph to that of pupae and adults and is sequestered in the eggs.

It localises to the secreted. In terms of biological role, this protein binds a chromophore: biliverdin IX, isomer gamma. Mixed with lipoprotein-bound carotenes, this blue protein provides hornworms with their green cryptic coloration which serves a camouflage. In Manduca sexta (Tobacco hawkmoth), this protein is Insecticyanin-A (INSA).